A 1292-amino-acid chain; its full sequence is Calcium-transporting ATPase 2 (1292 aa).

Residues 1 to 105 (MPTYNDDDDS…EQASSKSSTS (105 aa)) form a disordered region. The Cytoplasmic portion of the chain corresponds to 1 to 236 (MPTYNDDDDS…RLMLEAFKDK (236 aa)). Polar residues predominate over residues 23–41 (KPSSSQFLGVPSSNYNQRE). Low complexity predominate over residues 44–60 (SRSGSSTISREPSSSGT). The span at 68–78 (DSMKESYDKNK) shows a compositional bias: basic and acidic residues. Residues 237 to 257 (VLILLSIAAVVSLALGLYQTF) form a helical membrane-spanning segment. Over 258–273 (GQPPTLDPITGKPEPR) the chain is Vacuolar. The chain crosses the membrane as a helical span at residues 274–294 (VEWVEGVAIMAAIVIVVTVGG). Residues 295 to 448 (VNDWQKELQF…QLRLSRVADA (154 aa)) are Cytoplasmic-facing. The chain crosses the membrane as a helical span at residues 449-469 (IAKLGGAASALLFIVLLIEFL). The Vacuolar portion of the chain corresponds to 470–488 (VRLKSNDSSSKNKGQEFLQ). Residues 489-509 (ILIVSVTLLVVAVPEGLPLAV) traverse the membrane as a helical segment. Ca(2+)-binding residues include V498 and E503. The Cytoplasmic segment spans residues 510–938 (TLALAFATNR…GRTVNDAVKK (429 aa)). The active-site 4-aspartylphosphate intermediate is the D545. The Mg(2+) site is built by D545 and T547. Residues T547, E638, K691, R736, 807–809 (TGD), R856, and K862 each bind ATP. D881 contributes to the Mg(2+) binding site. ATP is bound at residue N884. Residues 939–959 (FLQFQITVNITAVFLTIISAV) traverse the membrane as a helical segment. N947 contributes to the Ca(2+) binding site. Over 960–966 (ASTDQSS) the chain is Vacuolar. A helical transmembrane segment spans residues 967 to 987 (VLTAVQLLWVNLIMDTLAALA). Residues N977 and D981 each coordinate Ca(2+). The Cytoplasmic segment spans residues 988-1016 (LATDPPTPEVLKRKPEKPGASLFTFDMWK). Residues 1017–1037 (MIICQSMYQLAVTLVLHFAGN) traverse the membrane as a helical segment. Over 1038 to 1084 (SIFHYPSNTADMNTIVFNTFVWLQLFNEINNRRLDNKLNIFERINHN) the chain is Vacuolar. A helical membrane pass occupies residues 1085 to 1105 (FLFIAIFVIVAGIQVIIVFFG). Residues 1106-1115 (GAAFSVKRID) are Cytoplasmic-facing. Residues 1116–1136 (GKGWAISIVFGVISIPLGALI) form a helical membrane-spanning segment. Topologically, residues 1137–1292 (RCVPNNFLRK…ALDKKSSNVH (156 aa)) are vacuolar.

It belongs to the cation transport ATPase (P-type) (TC 3.A.3) family.

It localises to the vacuole membrane. It carries out the reaction Ca(2+)(in) + ATP + H2O = Ca(2+)(out) + ADP + phosphate + H(+). This magnesium-dependent enzyme catalyzes the hydrolysis of ATP coupled with the transport of calcium. Transports the calcium to the vacuole and participates in the control of the cytosolic free calcium. The protein is Calcium-transporting ATPase 2 (pmc1) of Schizosaccharomyces pombe (strain 972 / ATCC 24843) (Fission yeast).